We begin with the raw amino-acid sequence, 983 residues long: Bifunctional glutamine synthetase adenylyltransferase/adenylyl-removing enzyme (983 aa).

An adenylyl removase region spans residues 1–490 (MDRKSSVTID…AHGQVFYSPV (490 aa)). The tract at residues 496–983 (RIPTQDLRMS…RVVDAVFWNQ (488 aa)) is adenylyl transferase.

It belongs to the GlnE family. The cofactor is Mg(2+).

The enzyme catalyses [glutamine synthetase]-O(4)-(5'-adenylyl)-L-tyrosine + phosphate = [glutamine synthetase]-L-tyrosine + ADP. It carries out the reaction [glutamine synthetase]-L-tyrosine + ATP = [glutamine synthetase]-O(4)-(5'-adenylyl)-L-tyrosine + diphosphate. Its function is as follows. Involved in the regulation of glutamine synthetase GlnA, a key enzyme in the process to assimilate ammonia. When cellular nitrogen levels are high, the C-terminal adenylyl transferase (AT) inactivates GlnA by covalent transfer of an adenylyl group from ATP to specific tyrosine residue of GlnA, thus reducing its activity. Conversely, when nitrogen levels are low, the N-terminal adenylyl removase (AR) activates GlnA by removing the adenylyl group by phosphorolysis, increasing its activity. The regulatory region of GlnE binds the signal transduction protein PII (GlnB) which indicates the nitrogen status of the cell. In Cutibacterium acnes (strain DSM 16379 / KPA171202) (Propionibacterium acnes), this protein is Bifunctional glutamine synthetase adenylyltransferase/adenylyl-removing enzyme.